Consider the following 925-residue polypeptide: Ectonucleotide pyrophosphatase/phosphodiesterase family member 1 (925 aa).

Residues 1–17 (MERDGCAGGGSRGGEGG) are compositionally biased toward gly residues. A disordered region spans residues 1 to 43 (MERDGCAGGGSRGGEGGRAPREGPAGNGRDRGRSHAAEAPGDP). Residues 1 to 76 (MERDGCAGGG…RTAKDPNTYK (76 aa)) lie on the Cytoplasmic side of the membrane. A Di-leucine motif motif is present at residues 45–52 (AAASLLAP). The chain crosses the membrane as a helical; Signal-anchor for type II membrane protein span at residues 77–97 (VLSLVLSVCVLTTILGCIFGL). The Extracellular segment spans residues 98–925 (KPSCAKEVKS…THLPTFSQED (828 aa)). SMB domains lie at 104–144 (EVKS…IEPE) and 145–189 (HIWT…GEKS). Intrachain disulfides connect Cys-108/Cys-122, Cys-112/Cys-140, Cys-120/Cys-133, Cys-126/Cys-132, Cys-149/Cys-166, Cys-154/Cys-184, Cys-164/Cys-177, Cys-170/Cys-176, Cys-195/Cys-241, and Cys-203/Cys-415. Asn-179 carries N-linked (GlcNAc...) asparagine glycosylation. The tract at residues 191–591 (VEEPCESINE…APNNGTHGSL (401 aa)) is phosphodiesterase. AMP-binding residues include Asp-218, Thr-256, and Asn-277. The Zn(2+) site is built by Asp-218 and Thr-256. The active-site AMP-threonine intermediate is the Thr-256. Thr-256 and Asn-277 together coordinate CMP. Residues Thr-256 and Asn-277 each coordinate dTMP. 2 residues coordinate GMP: Thr-256 and Asn-277. Thr-256 is modified (phosphothreonine). An N-linked (GlcNAc...) asparagine glycan is attached at Asn-285. Residues Leu-290, Lys-295, and Tyr-340 each coordinate GMP. AMP-binding residues include Lys-295 and Tyr-340. CMP contacts are provided by Lys-295 and Tyr-340. A dTMP-binding site is contributed by Tyr-340. An N-linked (GlcNAc...) asparagine glycan is attached at Asn-341. Asp-376 is an AMP binding site. Residues Asp-376, His-380, Asp-423, and His-424 each coordinate Zn(2+). CMP is bound at residue Asp-376. Asp-376 serves as a coordination point for dTMP. Residue Asp-376 participates in GMP binding. His-380 is a 2',3'-cGAMP binding site. His-424 is an AMP binding site. CMP is bound at residue His-424. His-424 is a dTMP binding site. His-424 is a GMP binding site. 6 disulfides stabilise this stretch: Cys-431–Cys-530, Cys-480–Cys-868, Cys-614–Cys-672, Cys-626–Cys-726, Cys-628–Cys-711, and Cys-838–Cys-848. Residue Asn-477 is glycosylated (N-linked (GlcNAc...) asparagine). Ser-532 contacts 2',3'-cGAMP. Residue His-535 participates in AMP binding. His-535 is a Zn(2+) binding site. CMP is bound at residue His-535. His-535 is a binding site for dTMP. His-535 contributes to the GMP binding site. N-linked (GlcNAc...) asparagine glycosylation is found at Asn-585, Asn-643, Asn-700, Asn-731, and Asn-748. Residues 597–647 (NPVYTPKHPKEVHPLVQCPFTRNPRDNLGCSCNPSILPIEDFQTQFNLTVA) are linker. Positions 654–925 (HETLPYGRPR…THLPTFSQED (272 aa)) are nuclease-like domain. Ca(2+) contacts are provided by Asp-800, Asp-802, Asp-804, Arg-806, and Asp-808.

It belongs to the nucleotide pyrophosphatase/phosphodiesterase family. In terms of assembly, homodimer. Interacts with INSR; leading to inhibit INSR autophosphorylation and subsequent activation of INSR kinase activity. As to quaternary structure, monomeric. Zn(2+) serves as cofactor. Autophosphorylated as part of the catalytic cycle of phosphodiesterase/pyrophosphatase activity. In terms of processing, N-glycosylated. Post-translationally, the secreted form is produced through cleavage at Lys-103 by intracellular processing. In terms of tissue distribution, expressed in plasma cells and also in a number of non-lymphoid tissues, including the distal convoluted tubule of the kidney, chondrocytes and epididymis. Expressed in melanocytes but not in keratinocytes.

It is found in the cell membrane. Its subcellular location is the basolateral cell membrane. The protein localises to the secreted. It catalyses the reaction Hydrolytically removes 5'-nucleotides successively from the 3'-hydroxy termini of 3'-hydroxy-terminated oligonucleotides.. The catalysed reaction is a ribonucleoside 5'-triphosphate + H2O = a ribonucleoside 5'-phosphate + diphosphate + H(+). The enzyme catalyses ATP + H2O = AMP + diphosphate + H(+). It carries out the reaction UTP + H2O = UMP + diphosphate + H(+). It catalyses the reaction GTP + H2O = GMP + diphosphate + H(+). The catalysed reaction is CTP + H2O = CMP + diphosphate + H(+). The enzyme catalyses 2',3'-cGAMP + 2 H2O = GMP + AMP + 2 H(+). It carries out the reaction P(1),P(4)-bis(5'-adenosyl) tetraphosphate + H2O = AMP + ATP + 2 H(+). It catalyses the reaction 3',5'-cyclic AMP + H2O = AMP + H(+). With respect to regulation, at low concentrations of ATP, a phosphorylated intermediate is formed which inhibits further hydrolysis. Nucleotide pyrophosphatase that generates diphosphate (PPi) and functions in bone mineralization and soft tissue calcification by regulating pyrophosphate levels. PPi inhibits bone mineralization and soft tissue calcification by binding to nascent hydroxyapatite crystals, thereby preventing further growth of these crystals. Preferentially hydrolyzes ATP, but can also hydrolyze other nucleoside 5' triphosphates such as GTP, CTP and UTP to their corresponding monophosphates with release of pyrophosphate, as well as diadenosine polyphosphates, and also 3',5'-cAMP to AMP. May also be involved in the regulation of the availability of nucleotide sugars in the endoplasmic reticulum and Golgi, and the regulation of purinergic signaling. Inhibits ectopic joint calcification and maintains articular chondrocytes by repressing hedgehog signaling; it is however unclear whether hedgehog inhibition is direct or indirect. Appears to modulate insulin sensitivity and function. Also involved in melanogenesis. Also able to hydrolyze 2',3'-cGAMP (cyclic GMP-AMP), a second messenger that activates TMEM173/STING and triggers type-I interferon production. 2',3'-cGAMP degradation takes place in the lumen or extracellular space, and not in the cytosol where it is produced; the role of 2',3'-cGAMP hydrolysis is therefore unclear. Not able to hydrolyze the 2',3'-cGAMP linkage isomer 3'-3'-cGAMP. This chain is Ectonucleotide pyrophosphatase/phosphodiesterase family member 1, found in Homo sapiens (Human).